The following is a 523-amino-acid chain: 2-isopropylmalate synthase (523 aa).

The 263-residue stretch at 5–267 (VIIFDTTLRD…HTAINHQEIW (263 aa)) folds into the Pyruvate carboxyltransferase domain. Residues Asp-14, His-202, His-204, and Asn-238 each coordinate Mn(2+). The regulatory domain stretch occupies residues 392 to 523 (RLDYFSVQSG…QHNENNKETV (132 aa)).

The protein belongs to the alpha-IPM synthase/homocitrate synthase family. LeuA type 1 subfamily. As to quaternary structure, homodimer. Requires Mn(2+) as cofactor.

The protein localises to the cytoplasm. It catalyses the reaction 3-methyl-2-oxobutanoate + acetyl-CoA + H2O = (2S)-2-isopropylmalate + CoA + H(+). It participates in amino-acid biosynthesis; L-leucine biosynthesis; L-leucine from 3-methyl-2-oxobutanoate: step 1/4. Catalyzes the condensation of the acetyl group of acetyl-CoA with 3-methyl-2-oxobutanoate (2-ketoisovalerate) to form 3-carboxy-3-hydroxy-4-methylpentanoate (2-isopropylmalate). This Escherichia coli (strain SMS-3-5 / SECEC) protein is 2-isopropylmalate synthase.